The sequence spans 238 residues: Glycerol uptake facilitator protein 4 (238 aa).

A run of 2 helical transmembrane segments spans residues 2-22 (IHQL…GVGV) and 39-59 (IFAI…FGNV). The NPA 1 signature appears at 62-64 (NPA). 3 helical membrane passes run 80 to 100 (FIPY…IVWI), 135 to 155 (FFVE…ISEV), and 158 to 178 (PGIV…GLGG). The NPA 2 signature appears at 185 to 187 (NLA). A helical membrane pass occupies residues 211-231 (YGIIVPGIAPFVGAACAALFM).

The protein belongs to the MIP/aquaporin (TC 1.A.8) family.

It localises to the cell membrane. Transporter that facilitates the transmembrane diffusion of water, dihydroxyacetone, glycerol, urea, H(2)O(2) and D/L-lactic acid. Is involved in the cellular racemization of lactate and lactate metabolism, but has likely a more general physiological role. The transported molecule is indeed lactic acid and not the lactate anion, in agreement with the assumption that, with very few exceptions, MIPs (major intrinsic proteins) only facilitate the transport of uncharged solutes. The polypeptide is Glycerol uptake facilitator protein 4 (Lactiplantibacillus plantarum (strain ATCC BAA-793 / NCIMB 8826 / WCFS1) (Lactobacillus plantarum)).